The sequence spans 119 residues: 5-hydroxyisourate hydrolase (119 aa).

Substrate contacts are provided by His8, Arg47, and Tyr116.

The protein belongs to the transthyretin family. 5-hydroxyisourate hydrolase subfamily. Homotetramer.

It catalyses the reaction 5-hydroxyisourate + H2O = 5-hydroxy-2-oxo-4-ureido-2,5-dihydro-1H-imidazole-5-carboxylate + H(+). It functions in the pathway purine metabolism; urate degradation; (S)-allantoin from urate: step 2/3. Functionally, catalyzes the hydrolysis of 5-hydroxyisourate (HIU) to 2-oxo-4-hydroxy-4-carboxy-5-ureidoimidazoline (OHCU). The chain is 5-hydroxyisourate hydrolase from Halalkalibacterium halodurans (strain ATCC BAA-125 / DSM 18197 / FERM 7344 / JCM 9153 / C-125) (Bacillus halodurans).